Consider the following 173-residue polypeptide: Translation initiation factor IF-3 (173 aa).

Belongs to the IF-3 family. In terms of assembly, monomer.

It localises to the cytoplasm. IF-3 binds to the 30S ribosomal subunit and shifts the equilibrium between 70S ribosomes and their 50S and 30S subunits in favor of the free subunits, thus enhancing the availability of 30S subunits on which protein synthesis initiation begins. The chain is Translation initiation factor IF-3 from Methylorubrum populi (strain ATCC BAA-705 / NCIMB 13946 / BJ001) (Methylobacterium populi).